The primary structure comprises 63 residues: Large ribosomal subunit protein bL28 (63 aa).

The protein belongs to the bacterial ribosomal protein bL28 family.

This chain is Large ribosomal subunit protein bL28, found in Geotalea daltonii (strain DSM 22248 / JCM 15807 / FRC-32) (Geobacter daltonii).